The sequence spans 208 residues: 3-isopropylmalate dehydratase small subunit (208 aa).

The protein belongs to the LeuD family. LeuD type 1 subfamily. Heterodimer of LeuC and LeuD.

It catalyses the reaction (2R,3S)-3-isopropylmalate = (2S)-2-isopropylmalate. It participates in amino-acid biosynthesis; L-leucine biosynthesis; L-leucine from 3-methyl-2-oxobutanoate: step 2/4. Functionally, catalyzes the isomerization between 2-isopropylmalate and 3-isopropylmalate, via the formation of 2-isopropylmaleate. The protein is 3-isopropylmalate dehydratase small subunit of Granulibacter bethesdensis (strain ATCC BAA-1260 / CGDNIH1).